The following is a 162-amino-acid chain: Xylulose kinase (162 aa).

Residues 16–39 form a disordered region; the sequence is GGHSATPRPATGPAGPAAHSGRHQ. Over residues 20 to 33 the composition is skewed to low complexity; it reads ATPRPATGPAGPAA.

This sequence belongs to the FGGY kinase family.

The enzyme catalyses D-xylulose + ATP = D-xylulose 5-phosphate + ADP + H(+). Functionally, catalyzes the phosphorylation of D-xylulose to D-xylulose 5-phosphate. This Actinoplanes sp. (strain ATCC 31351 / 3876) (Ampullariella sp.) protein is Xylulose kinase.